Here is a 489-residue protein sequence, read N- to C-terminus: Cysteine--tRNA ligase (489 aa).

Cys-27 contacts Zn(2+). Positions Val-29 to His-39 match the 'HIGH' region motif. Zn(2+)-binding residues include Cys-211, His-236, and Glu-240. The short motif at Lys-268–Ser-272 is the 'KMSKS' region element. Lys-271 serves as a coordination point for ATP.

It belongs to the class-I aminoacyl-tRNA synthetase family. Monomer. It depends on Zn(2+) as a cofactor.

The protein resides in the cytoplasm. The enzyme catalyses tRNA(Cys) + L-cysteine + ATP = L-cysteinyl-tRNA(Cys) + AMP + diphosphate. The protein is Cysteine--tRNA ligase of Prochlorococcus marinus (strain AS9601).